Reading from the N-terminus, the 220-residue chain is Uracil-DNA glycosylase 2 (220 aa).

Catalysis depends on aspartate 65, which acts as the Proton acceptor.

It belongs to the uracil-DNA glycosylase (UDG) superfamily. UNG family.

It is found in the cytoplasm. It carries out the reaction Hydrolyzes single-stranded DNA or mismatched double-stranded DNA and polynucleotides, releasing free uracil.. Functionally, excises uracil residues from the DNA which can arise as a result of misincorporation of dUMP residues by DNA polymerase or due to deamination of cytosine. The chain is Uracil-DNA glycosylase 2 from Bacteroides fragilis (strain ATCC 25285 / DSM 2151 / CCUG 4856 / JCM 11019 / LMG 10263 / NCTC 9343 / Onslow / VPI 2553 / EN-2).